The chain runs to 201 residues: Cutinase (201 aa).

A signal peptide spans 1 to 20 (MKTSAQQLLSLLLLPLSAIA). A disulfide bridge connects residues C31 and C105. The active-site Nucleophile is the S116. C164 and C171 form a disulfide bridge. The active site involves D168. H181 (proton donor/acceptor) is an active-site residue.

The protein belongs to the cutinase family. Post-translationally, the 2 disulfide bonds play a critical role in holding the catalytic residues in juxta-position; reduction of the disulfide bridges results in the complete inactivation of the enzyme.

The protein localises to the secreted. It carries out the reaction cutin + H2O = cutin monomers.. Catalyzes the hydrolysis of complex carboxylic polyesters found in the cell wall of plants. Degrades cutin, a macromolecule that forms the structure of the plant cuticle. Allows pathogenic fungi to penetrate through the cuticular barrier into the host plant during the initial stage of fungal infection. The sequence is that of Cutinase (CUT1) from Monilinia fructicola (Brown rot fungus).